The primary structure comprises 212 residues: Thymidylate kinase (212 aa).

Residue 13 to 20 (GLEGAGKS) coordinates ATP.

This sequence belongs to the thymidylate kinase family.

The catalysed reaction is dTMP + ATP = dTDP + ADP. Phosphorylation of dTMP to form dTDP in both de novo and salvage pathways of dTTP synthesis. The protein is Thymidylate kinase of Legionella pneumophila (strain Paris).